Consider the following 235-residue polypeptide: Pro-opiomelanocortin (235 aa).

The N-terminal stretch at 1–26 (MPRFCNSRSGALLLALLLQTSIDVWS) is a signal peptide. The residue at position 87 (F87) is a Phenylalanine amide. The interval 88–128 (GPRNSSSAGGSAQRRAEEETAGGDGRPEPSPREGKRSYSME) is disordered. Residues 112–128 (GRPEPSPREGKRSYSME) are compositionally biased toward basic and acidic residues. An N-acetylserine; in Corticotropin modification is found at S124. V136 bears the Valine amide mark. A glycan (N-linked (GlcNAc...) asparagine) is linked at N152. The residue at position 154 (S154) is a Phosphoserine. Positions 169–209 (EQPDGLEQVLEPDTEKADGPYRVEHFRWGNPPKDKRYGGFM) are disordered. Residues 181 to 205 (DTEKADGPYRVEHFRWGNPPKDKRY) show a composition bias toward basic and acidic residues.

This sequence belongs to the POMC family. Specific enzymatic cleavages at paired basic residues yield the different active peptides. ACTH and MSH are produced by the pituitary gland.

Its subcellular location is the secreted. Stimulates the adrenal glands to release cortisol. Functionally, anorexigenic peptide. Increases the pigmentation of skin by increasing melanin production in melanocytes. Its function is as follows. Increases the pigmentation of skin by increasing melanin production in melanocytes. In terms of biological role, endogenous orexigenic opiate. Endogenous opiate. The sequence is that of Pro-opiomelanocortin (Pomc) from Rattus norvegicus (Rat).